The following is a 389-amino-acid chain: Oxytocin receptor (389 aa).

Residues 1-27 are disordered; that stretch reads MEGELAANWSTEAVNSSAAPPGAEGNC. The Extracellular portion of the chain corresponds to 1-38; the sequence is MEGELAANWSTEAVNSSAAPPGAEGNCTAGPPRRNEAL. N-linked (GlcNAc...) asparagine glycosylation is found at Asn-8, Asn-15, and Asn-26. The span at 8–18 shows a compositional bias: polar residues; it reads NWSTEAVNSSA. A helical transmembrane segment spans residues 39 to 63; it reads ARVEVAVLCLILFLALSGNACVLLA. Residues 64–74 lie on the Cytoplasmic side of the membrane; the sequence is LRTTRHKHSRL. Residues 75 to 97 traverse the membrane as a helical segment; sequence FFFMKHLSIADLVVAVFQVLPQL. At 98 to 113 the chain is on the extracellular side; the sequence is LWDITFRFYGPDLLCR. A disulfide bond links Cys-112 and Cys-187. The chain crosses the membrane as a helical span at residues 114–135; it reads LVKYLQVVGMFASTYLLLLMSL. The Cytoplasmic portion of the chain corresponds to 136-154; sequence DRCLAICQPLRSLRRRTDR. The chain crosses the membrane as a helical span at residues 155–175; sequence LAVLATWLGCLVASAPQVHIF. The Extracellular segment spans residues 176–202; the sequence is SLREVADGVFDCWAVFIQPWGPKAYIT. Residues 203 to 225 form a helical membrane-spanning segment; it reads WITLAVYIVPVIVLAACYGLISF. At 226-275 the chain is on the cytoplasmic side; that stretch reads KIWQNLRLKTAAAAAAEAPEGAAAGDGGRMALARVSSVKLISKAKIRTVK. Residues 276 to 294 traverse the membrane as a helical segment; sequence MTFIIVLAFIVCWTPFFFV. At 295–309 the chain is on the extracellular side; it reads QMWSVWDANAPKEAS. A helical membrane pass occupies residues 310 to 332; it reads AFIIVMLLASLNSCCNPWIYMLF. Topologically, residues 333–389 are cytoplasmic; sequence TGHLFHELVQRFLCCSASYLKGNRLGETSTSKKSNSSSFVLSHRSSSQRSCSQPSTA. Residues 358-389 are disordered; that stretch reads GETSTSKKSNSSSFVLSHRSSSQRSCSQPSTA. The segment covering 360 to 389 has biased composition (low complexity); it reads TSTSKKSNSSSFVLSHRSSSQRSCSQPSTA. A phosphoserine mark is found at Ser-366 and Ser-368.

The protein belongs to the G-protein coupled receptor 1 family. Vasopressin/oxytocin receptor subfamily.

It is found in the cell membrane. Receptor for oxytocin. The activity of this receptor is mediated by G proteins which activate a phosphatidylinositol-calcium second messenger system. The protein is Oxytocin receptor (OXTR) of Macaca mulatta (Rhesus macaque).